The sequence spans 221 residues: Phosphoglycolate phosphatase (221 aa).

Aspartate 10 (nucleophile) is an active-site residue. Mg(2+)-binding residues include aspartate 10, aspartate 12, and aspartate 168.

The protein belongs to the HAD-like hydrolase superfamily. CbbY/CbbZ/Gph/YieH family. The cofactor is Mg(2+).

It carries out the reaction 2-phosphoglycolate + H2O = glycolate + phosphate. The protein operates within organic acid metabolism; glycolate biosynthesis; glycolate from 2-phosphoglycolate: step 1/1. Specifically catalyzes the dephosphorylation of 2-phosphoglycolate. Is involved in the dissimilation of the intracellular 2-phosphoglycolate formed during the DNA repair of 3'-phosphoglycolate ends, a major class of DNA lesions induced by oxidative stress. This chain is Phosphoglycolate phosphatase, found in Xanthomonas campestris pv. campestris (strain 8004).